Here is a 439-residue protein sequence, read N- to C-terminus: 5-hydroxybenzimidazole synthase (439 aa).

Substrate is bound by residues Met96, Tyr125, His164, Ser187–Gly189, Asn228–Arg231, and Glu267. Zn(2+) is bound at residue His271. Tyr294 is a binding site for substrate. His335 is a Zn(2+) binding site. Residues Cys410, Cys413, and Cys417 each coordinate [4Fe-4S] cluster.

The protein belongs to the ThiC family. 5-hydroxybenzimidazole synthase subfamily. In terms of assembly, homodimer. [4Fe-4S] cluster is required as a cofactor.

It carries out the reaction 5-amino-1-(5-phospho-beta-D-ribosyl)imidazole + AH2 + S-adenosyl-L-methionine = 5-hydroxybenzimidazole + 5'-deoxyadenosine + formate + L-methionine + A + NH4(+) + phosphate + 2 H(+). Functionally, catalyzes the conversion of aminoimidazole ribotide (AIR) to 5-hydroxybenzimidazole (5-HBI) in a radical S-adenosyl-L-methionine (SAM)-dependent reaction. Is thus involved in the anaerobic biosynthesis of the benzimidazole lower axial ligand of the cobamide produced by D.autotrophicum. The protein is 5-hydroxybenzimidazole synthase of Desulforapulum autotrophicum (strain ATCC 43914 / DSM 3382 / VKM B-1955 / HRM2) (Desulfobacterium autotrophicum).